A 363-amino-acid polypeptide reads, in one-letter code: MMFLPTDYCCRLSDQEYMELVFENGQILAKGQRSNVSLHNQRTKSIMDLYEAEYNEDFMKSIIHGGGGAITNLGDTQVVPQSHVAAAHETNMLESNKHVDDSETLKASSSKRMMVDYHNRKKIKFIPPDEQSVVADRSFKLGFDTSSVGFTEDSEGSMYLSSSLDDESDDARPQVPARTRKALVKRKRNAEAYNSPERNQRNDINKKMRTLQNLLPNSHKDDNESMLDEAINYMTNLQLQVQMMTMGNRFVTPSMMMPLGPNYSQMGLAMGVGMQMGEQQFLPAHVLGAGLPGINDSADMLRFLNHPGLMPMQNSAPFIPTENCSPQSVPPSCAAFPNQIPNPNSLSNLDGATLHKKSRKTNR.

Disordered stretches follow at residues 154-204 (SEGS…RNDI) and 340-363 (IPNP…KTNR). Positions 178–188 (RTRKALVKRKR) are enriched in basic residues. The region spanning 188–237 (RNAEAYNSPERNQRNDINKKMRTLQNLLPNSHKDDNESMLDEAINYMTNL) is the bHLH domain. Polar residues predominate over residues 340–350 (IPNPNSLSNLD). The span at 354–363 (LHKKSRKTNR) shows a compositional bias: basic residues.

Homodimer. Interacts with APRR1/TOC1. Binds to RGL2 and RGA. Associates to PTAC12/HMR/PAP5 which acts as a transcriptional coactivator. In terms of tissue distribution, mainly expressed in fruits and flowers and, to a lower extent, in leaves, stems, seedlings and roots.

The protein localises to the nucleus. In terms of biological role, transcription factor. The polypeptide is Transcription factor PIF6 (Arabidopsis thaliana (Mouse-ear cress)).